A 122-amino-acid polypeptide reads, in one-letter code: Large ribosomal subunit protein uL14 (122 aa).

It belongs to the universal ribosomal protein uL14 family. In terms of assembly, part of the 50S ribosomal subunit. Forms a cluster with proteins L3 and L19. In the 70S ribosome, L14 and L19 interact and together make contacts with the 16S rRNA in bridges B5 and B8.

Binds to 23S rRNA. Forms part of two intersubunit bridges in the 70S ribosome. The sequence is that of Large ribosomal subunit protein uL14 from Variovorax paradoxus (strain S110).